The following is a 92-amino-acid chain: Small ribosomal subunit protein uS19 (92 aa).

Belongs to the universal ribosomal protein uS19 family.

Functionally, protein S19 forms a complex with S13 that binds strongly to the 16S ribosomal RNA. This is Small ribosomal subunit protein uS19 from Neisseria gonorrhoeae (strain ATCC 700825 / FA 1090).